The primary structure comprises 330 residues: Carbonic anhydrase (330 aa).

Residues 1–109 (MSTASAFATN…AAARIDQITA (109 aa)) form a chloroplast transit peptide-like region.

This sequence belongs to the beta-class carbonic anhydrase family.

It is found in the cytoplasm. The enzyme catalyses hydrogencarbonate + H(+) = CO2 + H2O. Functionally, reversible hydration of carbon dioxide. In Flaveria brownii (Brown's yellowtops), this protein is Carbonic anhydrase.